We begin with the raw amino-acid sequence, 274 residues long: tRNA-cytidine(32) 2-sulfurtransferase (274 aa).

The short motif at 40–45 (SGGKDS) is the PP-loop motif element. [4Fe-4S] cluster is bound by residues cysteine 115, cysteine 118, and cysteine 206.

It belongs to the TtcA family. Homodimer. The cofactor is Mg(2+). It depends on [4Fe-4S] cluster as a cofactor.

The protein localises to the cytoplasm. The enzyme catalyses cytidine(32) in tRNA + S-sulfanyl-L-cysteinyl-[cysteine desulfurase] + AH2 + ATP = 2-thiocytidine(32) in tRNA + L-cysteinyl-[cysteine desulfurase] + A + AMP + diphosphate + H(+). The protein operates within tRNA modification. In terms of biological role, catalyzes the ATP-dependent 2-thiolation of cytidine in position 32 of tRNA, to form 2-thiocytidine (s(2)C32). The sulfur atoms are provided by the cysteine/cysteine desulfurase (IscS) system. This chain is tRNA-cytidine(32) 2-sulfurtransferase, found in Pseudomonas syringae pv. syringae (strain B728a).